Here is a 34-residue protein sequence, read N- to C-terminus: uncharacterized protein (34 aa).

The segment at methionine 1–aspartate 34 is disordered. The segment covering glycine 25–aspartate 34 has biased composition (basic residues).

This is an uncharacterized protein from Schizosaccharomyces pombe (strain 972 / ATCC 24843) (Fission yeast).